A 299-amino-acid chain; its full sequence is MLDNTRLRIAIQKSGRLSDDSRELLARCGIKINLHTQRLIAMAENMPIDILRVRDDDIPGLVMDGVVDLGIIGENVLEEELLNRRAQGEDPRYLTLRRLDFGGCRLSLATPVDEAWDGPAALDGKRIATSYPHLLKRYLDQKGVSFKSCLLNGSVEVAPRAGLADAICDLVSTGATLEANGLREVEVIYRSKACLIQRDGEMAQSKQQLIDKLLTRIQGVIQARESKYIMMHAPSERLEEVIALLPGAERPTILPLAGEQQRVAMHMVSSETLFWETMEKLKALGASSILVLPIEKMME.

Belongs to the ATP phosphoribosyltransferase family. Long subfamily. Equilibrium between an active dimeric form, an inactive hexameric form and higher aggregates. Interconversion between the various forms is largely reversible and is influenced by the natural substrates and inhibitors of the enzyme. Mg(2+) serves as cofactor.

It localises to the cytoplasm. It carries out the reaction 1-(5-phospho-beta-D-ribosyl)-ATP + diphosphate = 5-phospho-alpha-D-ribose 1-diphosphate + ATP. It functions in the pathway amino-acid biosynthesis; L-histidine biosynthesis; L-histidine from 5-phospho-alpha-D-ribose 1-diphosphate: step 1/9. With respect to regulation, feedback inhibited by histidine. Functionally, catalyzes the condensation of ATP and 5-phosphoribose 1-diphosphate to form N'-(5'-phosphoribosyl)-ATP (PR-ATP). Has a crucial role in the pathway because the rate of histidine biosynthesis seems to be controlled primarily by regulation of HisG enzymatic activity. The sequence is that of ATP phosphoribosyltransferase from Salmonella dublin (strain CT_02021853).